Reading from the N-terminus, the 252-residue chain is Triosephosphate isomerase (252 aa).

10 to 12 provides a ligand contact to substrate; sequence NWK. Histidine 96 functions as the Electrophile in the catalytic mechanism. The active-site Proton acceptor is the glutamate 168. Substrate is bound by residues glycine 174, serine 213, and 234 to 235; that span reads GG.

This sequence belongs to the triosephosphate isomerase family. Homodimer.

The protein localises to the cytoplasm. It catalyses the reaction D-glyceraldehyde 3-phosphate = dihydroxyacetone phosphate. The protein operates within carbohydrate biosynthesis; gluconeogenesis. Its pathway is carbohydrate degradation; glycolysis; D-glyceraldehyde 3-phosphate from glycerone phosphate: step 1/1. Functionally, involved in the gluconeogenesis. Catalyzes stereospecifically the conversion of dihydroxyacetone phosphate (DHAP) to D-glyceraldehyde-3-phosphate (G3P). The sequence is that of Triosephosphate isomerase from Idiomarina loihiensis (strain ATCC BAA-735 / DSM 15497 / L2-TR).